The following is a 249-amino-acid chain: Probable transcriptional regulatory protein Tfu_2096 (249 aa).

Belongs to the TACO1 family.

Its subcellular location is the cytoplasm. This Thermobifida fusca (strain YX) protein is Probable transcriptional regulatory protein Tfu_2096.